The chain runs to 201 residues: Adenylyl-sulfate kinase (201 aa).

35 to 42 (GLSGSGKS) is a binding site for ATP. Ser-109 (phosphoserine intermediate) is an active-site residue.

Belongs to the APS kinase family.

The enzyme catalyses adenosine 5'-phosphosulfate + ATP = 3'-phosphoadenylyl sulfate + ADP + H(+). The protein operates within sulfur metabolism; hydrogen sulfide biosynthesis; sulfite from sulfate: step 2/3. Its function is as follows. Catalyzes the synthesis of activated sulfate. The polypeptide is Adenylyl-sulfate kinase (Enterobacter sp. (strain 638)).